We begin with the raw amino-acid sequence, 299 residues long: Acetylglutamate kinase (299 aa).

Substrate is bound by residues Gly68–Gly69, Arg90, and Asn195.

Belongs to the acetylglutamate kinase family. ArgB subfamily.

It localises to the cytoplasm. It carries out the reaction N-acetyl-L-glutamate + ATP = N-acetyl-L-glutamyl 5-phosphate + ADP. It participates in amino-acid biosynthesis; L-arginine biosynthesis; N(2)-acetyl-L-ornithine from L-glutamate: step 2/4. Catalyzes the ATP-dependent phosphorylation of N-acetyl-L-glutamate. The chain is Acetylglutamate kinase from Erythrobacter litoralis (strain HTCC2594).